The primary structure comprises 193 residues: Ferredoxin-2, mitochondrial (193 aa).

Residues 38–70 (QATPEKLETSNEEEGSSSAQITAGVESDAENQR) are disordered. The 103-residue stretch at 78-180 (VEVVFLDRSG…GAEFTLPKIT (103 aa)) folds into the 2Fe-2S ferredoxin-type domain. Residues C115, C121, C124, and C161 each contribute to the [2Fe-2S] cluster site.

Belongs to the adrenodoxin/putidaredoxin family. Component of the mitochondrial core iron-sulfur cluster (ISC) complex composed of NFS1, LYRM4, NDUFAB1, ISCU, FXN, and FDX2; this complex is a heterohexamer containing two copies of each monomer. Requires [2Fe-2S] cluster as cofactor.

The protein resides in the mitochondrion. The protein localises to the mitochondrion matrix. Functionally, electron donor, of the core iron-sulfur cluster (ISC) assembly complex, that acts to reduce the persulfide into sulfide during [2Fe-2S] clusters assembly on the scaffolding protein ISCU. The core iron-sulfur cluster (ISC) assembly complex is involved in the de novo synthesis of a [2Fe-2S] cluster, the first step of the mitochondrial iron-sulfur protein biogenesis. This process is initiated by the cysteine desulfurase complex (NFS1:LYRM4:NDUFAB1) that produces persulfide which is delivered on the scaffold protein ISCU in a FXN-dependent manner. Then this complex is stabilized by FDX2 which provides reducing equivalents to accomplish the [2Fe-2S] cluster assembly. Finally, the [2Fe-2S] cluster is transferred from ISCU to chaperone proteins, including HSCB, HSPA9 and GLRX5. Essential for coenzyme Q biosynthesis: together with FDXR, transfers the electrons required for the hydroxylation reaction performed by COQ6. The polypeptide is Ferredoxin-2, mitochondrial (Xenopus laevis (African clawed frog)).